Reading from the N-terminus, the 364-residue chain is Dual-specificity RNA methyltransferase RlmN (364 aa).

The active-site Proton acceptor is E93. The 239-residue stretch at 99-337 (EDDRGTLCIS…ATIRKTRGDD (239 aa)) folds into the Radical SAM core domain. A disulfide bridge links C106 with C342. The [4Fe-4S] cluster site is built by C113, C117, and C120. S-adenosyl-L-methionine contacts are provided by residues 167–168 (GE), S199, 221–223 (SLH), and N299. The S-methylcysteine intermediate role is filled by C342.

Belongs to the radical SAM superfamily. RlmN family. It depends on [4Fe-4S] cluster as a cofactor.

The protein resides in the cytoplasm. It catalyses the reaction adenosine(2503) in 23S rRNA + 2 reduced [2Fe-2S]-[ferredoxin] + 2 S-adenosyl-L-methionine = 2-methyladenosine(2503) in 23S rRNA + 5'-deoxyadenosine + L-methionine + 2 oxidized [2Fe-2S]-[ferredoxin] + S-adenosyl-L-homocysteine. The catalysed reaction is adenosine(37) in tRNA + 2 reduced [2Fe-2S]-[ferredoxin] + 2 S-adenosyl-L-methionine = 2-methyladenosine(37) in tRNA + 5'-deoxyadenosine + L-methionine + 2 oxidized [2Fe-2S]-[ferredoxin] + S-adenosyl-L-homocysteine. Its function is as follows. Specifically methylates position 2 of adenine 2503 in 23S rRNA and position 2 of adenine 37 in tRNAs. m2A2503 modification seems to play a crucial role in the proofreading step occurring at the peptidyl transferase center and thus would serve to optimize ribosomal fidelity. The sequence is that of Dual-specificity RNA methyltransferase RlmN from Dichelobacter nodosus (strain VCS1703A).